Reading from the N-terminus, the 278-residue chain is Pantothenate synthetase (278 aa).

Methionine 26–histidine 33 lines the ATP pocket. Histidine 33 (proton donor) is an active-site residue. (R)-pantoate is bound at residue glutamine 57. Glutamine 57 provides a ligand contact to beta-alanine. Glycine 144 to aspartate 147 is an ATP binding site. Position 150 (glutamine 150) interacts with (R)-pantoate. ATP is bound by residues glycine 173 and leucine 181–arginine 184.

It belongs to the pantothenate synthetase family. Homodimer.

Its subcellular location is the cytoplasm. It catalyses the reaction (R)-pantoate + beta-alanine + ATP = (R)-pantothenate + AMP + diphosphate + H(+). It functions in the pathway cofactor biosynthesis; (R)-pantothenate biosynthesis; (R)-pantothenate from (R)-pantoate and beta-alanine: step 1/1. In terms of biological role, catalyzes the condensation of pantoate with beta-alanine in an ATP-dependent reaction via a pantoyl-adenylate intermediate. The chain is Pantothenate synthetase from Neisseria meningitidis serogroup C / serotype 2a (strain ATCC 700532 / DSM 15464 / FAM18).